The following is a 173-amino-acid chain: Bifunctional protein PyrR (173 aa).

Residues 93–105 (VILVDDVLYTGRT) carry the PRPP-binding motif.

This sequence belongs to the purine/pyrimidine phosphoribosyltransferase family. PyrR subfamily. In terms of assembly, homodimer and homohexamer; in equilibrium.

It carries out the reaction UMP + diphosphate = 5-phospho-alpha-D-ribose 1-diphosphate + uracil. Its function is as follows. Regulates transcriptional attenuation of the pyrimidine nucleotide (pyr) operon by binding in a uridine-dependent manner to specific sites on pyr mRNA. This disrupts an antiterminator hairpin in the RNA and favors formation of a downstream transcription terminator, leading to a reduced expression of downstream genes. In terms of biological role, also displays a weak uracil phosphoribosyltransferase activity which is not physiologically significant. In Streptococcus suis (strain 05ZYH33), this protein is Bifunctional protein PyrR.